A 229-amino-acid polypeptide reads, in one-letter code: Peptidase E (229 aa).

Active-site charge relay system residues include serine 120, aspartate 135, and histidine 157.

It belongs to the peptidase S51 family.

The protein localises to the cytoplasm. It catalyses the reaction Dipeptidase E catalyzes the hydrolysis of dipeptides Asp-|-Xaa. It does not act on peptides with N-terminal Glu, Asn or Gln, nor does it cleave isoaspartyl peptides.. Hydrolyzes dipeptides containing N-terminal aspartate residues. May play a role in allowing the cell to use peptide aspartate to spare carbon otherwise required for the synthesis of the aspartate family of amino acids. The protein is Peptidase E of Salmonella schwarzengrund (strain CVM19633).